The chain runs to 307 residues: Ribonuclease Z (307 aa).

Zn(2+) contacts are provided by His61, His63, Asp65, His66, His138, Asp208, and His264. The active-site Proton acceptor is the Asp65.

This sequence belongs to the RNase Z family. Homodimer. Requires Zn(2+) as cofactor.

The enzyme catalyses Endonucleolytic cleavage of RNA, removing extra 3' nucleotides from tRNA precursor, generating 3' termini of tRNAs. A 3'-hydroxy group is left at the tRNA terminus and a 5'-phosphoryl group is left at the trailer molecule.. Functionally, zinc phosphodiesterase, which displays some tRNA 3'-processing endonuclease activity. Probably involved in tRNA maturation, by removing a 3'-trailer from precursor tRNA. In Pyrococcus abyssi (strain GE5 / Orsay), this protein is Ribonuclease Z.